A 451-amino-acid chain; its full sequence is Tetraspanin-14 (451 aa).

Topologically, residues 1-56 (MPHRAPRRFMKTAPGACDWEQCLLMGSGEPTRARAVVSSSHKQRKPRQEISACLKW) are cytoplasmic. A Basolateral membrane targeting motif is present at residues 20-24 (EQCLL). Residues 57–77 (LVFLLNSIVFLVGVGILALGV) traverse the membrane as a helical segment. The Extracellular segment spans residues 78-96 (YLFIKDFREVKLVDIILNP). The helical transmembrane segment at 97-117 (AILISIFGFSICVVSFFGFMG) threads the bilayer. Over 118 to 130 (ALRDNIFLLKCFA) the chain is Cytoplasmic. A helical transmembrane segment spans residues 131–151 (ACVFLSYILVVAVTLVFFTLF). Residues 152–285 (YTDTTEGLSA…QPLRTLFESH (134 aa)) are Extracellular-facing. Asn205 and Asn211 each carry an N-linked (GlcNAc...) asparagine glycan. Residues 286–306 (AVHVGAFVALLIVPVCISVCL) traverse the membrane as a helical segment. Topologically, residues 307–451 (TNILAKQVDH…TDLVPQKSKS (145 aa)) are cytoplasmic. Positions 328 to 451 (NDRRRKRDHN…TDLVPQKSKS (124 aa)) are disordered. Positions 366–376 (PDIPPPLPPIE) are enriched in pro residues. A compositionally biased stretch (low complexity) spans 410 to 434 (ATTTRTPPAAAGPAPTPQATTTNRT). A compositionally biased stretch (polar residues) spans 435–444 (HQWVLQQTDL).

This sequence belongs to the tetraspanin (TM4SF) family. Expressed in the germline, particularly in sperm cells. As to expression, expressed in the germline (particularly in sperm cells), anterior sensory cilia, hypodermis and vulva (at protein level). In terms of tissue distribution, expressed in the pharynx, hypodermis and vulva (at protein level).

The protein resides in the cell membrane. It is found in the cytoplasmic vesicle membrane. Its subcellular location is the endosome membrane. It localises to the early endosome membrane. The protein localises to the late endosome membrane. The protein resides in the recycling endosome membrane. It is found in the apical cell membrane. Its subcellular location is the basolateral cell membrane. Functions redundantly with tsp-12 to regulate cell surface levels of the BMP type II receptor daf-4 (but not BMP type I receptor sma-6), probably by regulating endosomal sorting and recycling of receptors, preventing their targeting to degradative lysosomes. Together with tsp-12, regulates cell fate specification in the postembryonic mesodermal M lineage, body size, male development and vulva development, probably by positively modulating BMP-like Sma/Mab signaling. Together with tsp-12 involved in maintaining the structural and functional integrity of the endosomal network. Together with tsp-12, probably acts by modulating the activation of glp-1, Notch-like receptor, to regulate germline maturation. In terms of biological role, functions redundantly with tsp-12 to regulate cell fate specification in the postembryonic mesodermal M lineage, body size, embryonic and vulva development. Its function is as follows. Functions redundantly with tsp-12 to regulate cell fate specification in the postembryonic mesodermal M lineage. Likely plays a complementary role in mesodermal development with tsp-14 isoform a, but may be more critical. The protein is Tetraspanin-14 of Caenorhabditis elegans.